The chain runs to 332 residues: Probable farnesyl diphosphate synthase (332 aa).

Lys75, Arg78, and His107 together coordinate isopentenyl diphosphate. Asp114 and Asp120 together coordinate Mg(2+). A (2E)-geranyl diphosphate-binding site is contributed by Arg125. Arg126 is a binding site for isopentenyl diphosphate. (2E)-geranyl diphosphate contacts are provided by Lys208, Ser209, Gln250, and Lys267.

The protein belongs to the FPP/GGPP synthase family. Mg(2+) serves as cofactor.

The protein localises to the cytoplasm. It carries out the reaction isopentenyl diphosphate + (2E)-geranyl diphosphate = (2E,6E)-farnesyl diphosphate + diphosphate. In Bradyrhizobium diazoefficiens (strain JCM 10833 / BCRC 13528 / IAM 13628 / NBRC 14792 / USDA 110), this protein is Probable farnesyl diphosphate synthase (fppS).